We begin with the raw amino-acid sequence, 220 residues long: Metalloproteinase inhibitor 2 (220 aa).

An N-terminal signal peptide occupies residues 1–26 (MGAAARTLRLALGLLLLATLLRPADA). Residue Cys-27 participates in Zn(2+) binding. Involved in metalloproteinase-binding stretches follow at residues 27 to 30 (CSCS) and 95 to 96 (SA). Disulfide bonds link Cys-27/Cys-98, Cys-29/Cys-127, Cys-39/Cys-152, Cys-154/Cys-201, Cys-159/Cys-164, and Cys-172/Cys-193. The 126-residue stretch at 27–152 (CSCSPVHPQQ…SLNHRYQMGC (126 aa)) folds into the NTR domain.

Belongs to the protease inhibitor I35 (TIMP) family. In terms of assembly, interacts (via the C-terminal) with MMP2 (via the C-terminal PEX domain); the interaction inhibits the MMP2 activity. Post-translationally, the activity of TIMP2 is dependent on the presence of disulfide bonds.

It is found in the secreted. Complexes with metalloproteinases (such as collagenases) and irreversibly inactivates them by binding to their catalytic zinc cofactor. Known to act on MMP-1, MMP-2, MMP-3, MMP-7, MMP-8, MMP-9, MMP-10, MMP-13, MMP-14, MMP-15, MMP-16 and MMP-19. The protein is Metalloproteinase inhibitor 2 (TIMP2) of Homo sapiens (Human).